The following is a 1430-amino-acid chain: 3'-5' RNA helicase YTHDC2 (1430 aa).

The interval 1-37 (MSRPSSVSPRQPAPGGGGGGGPSPCGPGGGGRAKGLK) is disordered. Over residues 14–33 (PGGGGGGGPSPCGPGGGGRA) the composition is skewed to gly residues. The 69-residue stretch at 38–106 (DIRIDEEVKI…NRYLTVKKKD (69 aa)) folds into the R3H domain. The Helicase ATP-binding domain occupies 203-369 (VKIIKENKVV…FGSCPVIYIQ (167 aa)). 216–223 (GETGSGKT) serves as a coordination point for ATP. The DEAH box motif lies at 316–319 (DEVH). ANK repeat units lie at residues 506 to 538 (TSAT…SKAS) and 539 to 571 (NGWM…FGNL). The 173-residue stretch at 612–784 (LLYNICHSCD…ELCLHTKLLA (173 aa)) folds into the Helicase C-terminal domain. Ser1089, Ser1090, and Ser1092 each carry phosphoserine. Residues 1164–1174 (EQSAGLQQPSG) are compositionally biased toward polar residues. The interval 1164–1288 (EQSAGLQQPS…SPSPRPNMPV (125 aa)) is disordered. Low complexity predominate over residues 1191-1200 (SSWRSNNSRK). Ser1202 carries the post-translational modification Phosphoserine. The span at 1231–1249 (KYKDRGILHPKRGTEDRSD) shows a compositional bias: basic and acidic residues. A compositionally biased stretch (low complexity) spans 1250-1264 (QSSVKSTDSSSYPSP). A phosphoserine mark is found at Ser1263, Ser1267, and Ser1281. The YTH domain maps to 1288 to 1418 (VRYFIMKSSN…QVGEQLLQLW (131 aa)). RNA-binding positions include 1294 to 1296 (KSS), Trp1310, and Trp1360.

It belongs to the DEAD box helicase family. DEAH subfamily. In terms of assembly, interacts with MEIOC; binds transcripts that regulate the mitotic cell cycle inhibiting progression into metaphase, thereby allowing meiotic prophase to proceed normally. Interacts (via ANK repeats) with XRN1. Interacts with ZCCHC4. Associates with the small ribosomal subunit. Interacts with RBM46.

It localises to the cytoplasm. Its subcellular location is the perinuclear region. It carries out the reaction ATP + H2O = ADP + phosphate + H(+). 3'-5' RNA helicase that plays a key role in the male and female germline by promoting transition from mitotic to meiotic divisions in stem cells. Specifically recognizes and binds N6-methyladenosine (m6A)-containing RNAs, a modification present at internal sites of mRNAs and some non-coding RNAs that plays a role in the efficiency of RNA processing and stability. Essential for ensuring a successful progression of the meiotic program in the germline by regulating the level of m6A-containing RNAs. Acts by binding and promoting degradation of m6A-containing mRNAs: the 3'-5' RNA helicase activity is required for this process and RNA degradation may be mediated by XRN1 exoribonuclease. Required for both spermatogenesis and oogenesis. The polypeptide is 3'-5' RNA helicase YTHDC2 (Pongo abelii (Sumatran orangutan)).